Consider the following 246-residue polypeptide: MSILITRPSPAGEALVSRLRALGQVAWSFPLIEFVAGRELPTLADRLATLTENDLVFALSQHAVAFAHAQLQRDGRNWPVAPRYFAIGRTTALALHTVSGFDIRYPLDREISEALLQLPELQNIAGKRALILRGNGGRELLGETLTARGAEVSFCECYQRCAKHYDGAEEAMRWHTRGVTTLVVTSGEMLQRLWSLTPQWYREHWLLRCRLLVVSERLAHLARELGWQDIKVADNADNDALLRALQ.

Belongs to the uroporphyrinogen-III synthase family. In terms of assembly, monomer.

The enzyme catalyses hydroxymethylbilane = uroporphyrinogen III + H2O. It participates in porphyrin-containing compound metabolism; protoporphyrin-IX biosynthesis; coproporphyrinogen-III from 5-aminolevulinate: step 3/4. In terms of biological role, catalyzes cyclization of the linear tetrapyrrole, hydroxymethylbilane, to the macrocyclic uroporphyrinogen III. This Salmonella typhimurium (strain LT2 / SGSC1412 / ATCC 700720) protein is Uroporphyrinogen-III synthase (hemD).